Here is a 161-residue protein sequence, read N- to C-terminus: Nucleotide-binding protein Bphy_0527 (161 aa).

The protein belongs to the YajQ family.

Nucleotide-binding protein. This is Nucleotide-binding protein Bphy_0527 from Paraburkholderia phymatum (strain DSM 17167 / CIP 108236 / LMG 21445 / STM815) (Burkholderia phymatum).